Consider the following 395-residue polypeptide: Lipoyl synthase, mitochondrial (395 aa).

Residues 1 to 14 constitute a mitochondrion transit peptide; the sequence is MISLRSISRSPAVQ. Residues Cys112, Cys117, Cys123, Cys142, Cys146, Cys149, and Ser357 each coordinate [4Fe-4S] cluster. Residues 127 to 346 enclose the Radical SAM core domain; it reads KKSEATATIM…RDTALQMGFL (220 aa).

The protein belongs to the radical SAM superfamily. Lipoyl synthase family. [4Fe-4S] cluster serves as cofactor.

The protein localises to the mitochondrion. It carries out the reaction [[Fe-S] cluster scaffold protein carrying a second [4Fe-4S](2+) cluster] + N(6)-octanoyl-L-lysyl-[protein] + 2 oxidized [2Fe-2S]-[ferredoxin] + 2 S-adenosyl-L-methionine + 4 H(+) = [[Fe-S] cluster scaffold protein] + N(6)-[(R)-dihydrolipoyl]-L-lysyl-[protein] + 4 Fe(3+) + 2 hydrogen sulfide + 2 5'-deoxyadenosine + 2 L-methionine + 2 reduced [2Fe-2S]-[ferredoxin]. It participates in protein modification; protein lipoylation via endogenous pathway; protein N(6)-(lipoyl)lysine from octanoyl-[acyl-carrier-protein]: step 2/2. In terms of biological role, catalyzes the radical-mediated insertion of two sulfur atoms into the C-6 and C-8 positions of the octanoyl moiety bound to the lipoyl domains of lipoate-dependent enzymes, thereby converting the octanoylated domains into lipoylated derivatives. The chain is Lipoyl synthase, mitochondrial from Debaryomyces hansenii (strain ATCC 36239 / CBS 767 / BCRC 21394 / JCM 1990 / NBRC 0083 / IGC 2968) (Yeast).